We begin with the raw amino-acid sequence, 605 residues long: Protein ZRG17 (605 aa).

At Met-1–Lys-225 the chain is on the cytoplasmic side. Ser-16 and Ser-131 each carry phosphoserine. The interval Pro-118–Phe-178 is disordered. Residues Ser-143–Thr-176 are compositionally biased toward polar residues. A helical transmembrane segment spans residues Ala-226 to Val-246. Over Gly-247 to Asn-254 the chain is Lumenal. The helical transmembrane segment at Phe-255 to Val-275 threads the bilayer. Residues Glu-276 to Gly-287 are Cytoplasmic-facing. A helical transmembrane segment spans residues Thr-288–Val-308. Position 309 (Ser-309) is a topological domain, lumenal. A helical membrane pass occupies residues Leu-310–Val-330. Topologically, residues Glu-331–Glu-363 are cytoplasmic. The helical transmembrane segment at Asn-364–Tyr-384 threads the bilayer. The Lumenal segment spans residues Lys-385–Asn-399. Residues Pro-400 to Leu-420 form a helical membrane-spanning segment. Residues Ser-421–Ser-422 lie on the Cytoplasmic side of the membrane. The chain crosses the membrane as a helical span at residues Ile-423–Ile-443. Over Ala-444–Tyr-545 the chain is Lumenal. Polar residues predominate over residues Asp-473–Glu-482. The tract at residues Asp-473–Met-497 is disordered. The residue at position 498 (Ser-498) is a Phosphoserine. A helical transmembrane segment spans residues Ile-546–Ile-566. The Cytoplasmic segment spans residues Lys-567–Ile-605.

The protein localises to the endoplasmic reticulum membrane. This is Protein ZRG17 (ZRG17) from Saccharomyces cerevisiae (strain ATCC 204508 / S288c) (Baker's yeast).